Reading from the N-terminus, the 551-residue chain is Dihydroxy-acid dehydratase (551 aa).

Position 78 (D78) interacts with Mg(2+). A [2Fe-2S] cluster-binding site is contributed by C119. Residues D120 and K121 each contribute to the Mg(2+) site. Residue K121 is modified to N6-carboxylysine. C191 lines the [2Fe-2S] cluster pocket. E442 provides a ligand contact to Mg(2+). Residue S468 is the Proton acceptor of the active site.

This sequence belongs to the IlvD/Edd family. As to quaternary structure, homodimer. Requires [2Fe-2S] cluster as cofactor. The cofactor is Mg(2+).

The catalysed reaction is (2R)-2,3-dihydroxy-3-methylbutanoate = 3-methyl-2-oxobutanoate + H2O. The enzyme catalyses (2R,3R)-2,3-dihydroxy-3-methylpentanoate = (S)-3-methyl-2-oxopentanoate + H2O. It functions in the pathway amino-acid biosynthesis; L-isoleucine biosynthesis; L-isoleucine from 2-oxobutanoate: step 3/4. The protein operates within amino-acid biosynthesis; L-valine biosynthesis; L-valine from pyruvate: step 3/4. In terms of biological role, functions in the biosynthesis of branched-chain amino acids. Catalyzes the dehydration of (2R,3R)-2,3-dihydroxy-3-methylpentanoate (2,3-dihydroxy-3-methylvalerate) into 2-oxo-3-methylpentanoate (2-oxo-3-methylvalerate) and of (2R)-2,3-dihydroxy-3-methylbutanoate (2,3-dihydroxyisovalerate) into 2-oxo-3-methylbutanoate (2-oxoisovalerate), the penultimate precursor to L-isoleucine and L-valine, respectively. This Halothermothrix orenii (strain H 168 / OCM 544 / DSM 9562) protein is Dihydroxy-acid dehydratase.